We begin with the raw amino-acid sequence, 494 residues long: Beta-glucosidase 29 (494 aa).

Residues 1–28 (MAWLGIGMGRQIVPVLVFVAVLCSGVDA) form the signal peptide. Gln-49 serves as a coordination point for a beta-D-glucoside. The N-linked (GlcNAc...) asparagine glycan is linked to Asn-103. Residues His-138 and 183–184 (NE) contribute to the a beta-D-glucoside site. The Proton donor role is filled by Glu-184. Cys-203 and Cys-211 form a disulfide bridge. N-linked (GlcNAc...) asparagine glycosylation is present at Asn-263. Tyr-327 is an a beta-D-glucoside binding site. A glycan (N-linked (GlcNAc...) asparagine) is linked at Asn-352. Glu-398 contacts a beta-D-glucoside. Catalysis depends on Glu-398, which acts as the Nucleophile. Residue Asn-406 is glycosylated (N-linked (GlcNAc...) asparagine). Residues Trp-447, 454–455 (EW), and Phe-463 contribute to the a beta-D-glucoside site.

This sequence belongs to the glycosyl hydrolase 1 family.

The enzyme catalyses Hydrolysis of terminal, non-reducing beta-D-glucosyl residues with release of beta-D-glucose.. This is Beta-glucosidase 29 (BGLU29) from Oryza sativa subsp. japonica (Rice).